A 402-amino-acid chain; its full sequence is S-adenosylmethionine synthase (402 aa).

137–142 (GQGSAD) contacts ATP.

Belongs to the AdoMet synthase 2 family. Requires Mg(2+) as cofactor.

It catalyses the reaction L-methionine + ATP + H2O = S-adenosyl-L-methionine + phosphate + diphosphate. It participates in amino-acid biosynthesis; S-adenosyl-L-methionine biosynthesis; S-adenosyl-L-methionine from L-methionine: step 1/1. In terms of biological role, catalyzes the formation of S-adenosylmethionine from methionine and ATP. The protein is S-adenosylmethionine synthase of Pyrobaculum neutrophilum (strain DSM 2338 / JCM 9278 / NBRC 100436 / V24Sta) (Thermoproteus neutrophilus).